Consider the following 296-residue polypeptide: Haloalkane dehalogenase (296 aa).

An AB hydrolase-1 domain is found at 31-155; sequence PILFQHGNPT…QDRDLFQAFR (125 aa). A chloride-binding site is contributed by asparagine 38. Aspartate 108 acts as the Nucleophile in catalysis. Tryptophan 109 lines the chloride pocket. The active-site Proton donor is glutamate 132. Catalysis depends on histidine 272, which acts as the Proton acceptor.

It belongs to the haloalkane dehalogenase family. Type 2 subfamily. Monomer.

The protein localises to the periplasm. The enzyme catalyses 1-haloalkane + H2O = a halide anion + a primary alcohol + H(+). It carries out the reaction (3R,6R)-1,3,4,6-tetrachlorocyclohexa-1,4-diene + 2 H2O = 2,5-dichlorocyclohexa-2,5-dien-1,4-diol + 2 chloride + 2 H(+). It functions in the pathway xenobiotic degradation; gamma-hexachlorocyclohexane degradation. Its activity is regulated as follows. Competitively inhibited by the key pollutants 1,2-dichloroethane (1,2-DCE) and 1,2-dichloropropane (1,2-DCP). Functionally, catalyzes hydrolytic cleavage of carbon-halogen bonds in halogenated aliphatic compounds, leading to the formation of the corresponding primary alcohols, halide ions and protons. Has a broad substrate specificity since not only monochloroalkanes (C3 to C10) but also dichloroalkanes (&gt; C3), bromoalkanes, and chlorinated aliphatic alcohols are good substrates. Shows almost no activity with 1,2-dichloroethane, but very high activity with the brominated analog. Is involved in the degradation of the important environmental pollutant gamma-hexachlorocyclohexane (gamma-HCH or lindane) as it also catalyzes conversion of 1,3,4,6-tetrachloro-1,4-cyclohexadiene (1,4-TCDN) to 2,5-dichloro-2,5-cyclohexadiene-1,4-diol (2,5-DDOL) via the intermediate 2,4,5-trichloro-2,5-cyclohexadiene-1-ol (2,4,5-DNOL). This degradation pathway allows S.japonicum UT26 to grow on gamma-HCH as the sole source of carbon and energy. The polypeptide is Haloalkane dehalogenase (Sphingobium indicum (strain DSM 16413 / CCM 7287 / MTCC 6362 / UT26 / NBRC 101211 / UT26S) (Sphingobium japonicum)).